We begin with the raw amino-acid sequence, 560 residues long: Platelet glycoprotein V (560 aa).

The first 16 residues, 1–16 (MLRGTLLCAVLGLLRA), serve as a signal peptide directing secretion. Residues 17–50 (QPFPCPPACKCVFRDAAQCSGGDVARISALGLPT) enclose the LRRNT domain. Residues 17-523 (QPFPCPPACK…KGQDHSPFWG (507 aa)) lie on the Extracellular side of the membrane. An N-linked (GlcNAc...) asparagine glycan is attached at Asn51. LRR repeat units follow at residues 75-96 (VLQR…TFSD), 99-120 (KLKT…LLDK), 123-144 (LLEQ…MFQK), 147-168 (NLQE…LFTN), 171-193 (NLKL…LGAQ), 195-216 (KLER…LLNS), 219-240 (ALTE…AFDR), 243-264 (NLSS…LFLH), 267-288 (NLTL…LFGE), 291-312 (GLQE…AFRN), 340-361 (ELQV…LLRG), 364-385 (KLRQ…LFRN), and 388-409 (SLES…VFGA). Asn181 carries N-linked (GlcNAc...) (complex) asparagine glycosylation. Asn243 is a glycosylation site (N-linked (GlcNAc...) (complex) asparagine). 3 N-linked (GlcNAc...) asparagine glycosylation sites follow: Asn267, Asn298, and Asn312. An N-linked (GlcNAc...) asparagine glycan is attached at Asn385. The LRRCT domain maps to 421-474 (NSWRCDCGLGPFLGWLRQHLGLVGGEEPPRCAGPGAHAGLPLWALPGGDAECPG). Positions 469–498 (DAECPGPRGPPPRPAADSSSEAPVHPALAP) are disordered. Residue Asn499 is glycosylated (N-linked (GlcNAc...) asparagine). The helical transmembrane segment at 524–544 (FYFLLLAVQAMITVIIVFAMI) threads the bilayer. Topologically, residues 545-560 (KIGQLFRKLIRERALG) are cytoplasmic.

Post-translationally, the N-terminus is blocked. As to expression, platelets and megakaryocytes.

The protein localises to the membrane. Functionally, the GPIb-V-IX complex functions as the vWF receptor and mediates vWF-dependent platelet adhesion to blood vessels. The adhesion of platelets to injured vascular surfaces in the arterial circulation is a critical initiating event in hemostasis. In Homo sapiens (Human), this protein is Platelet glycoprotein V (GP5).